We begin with the raw amino-acid sequence, 511 residues long: 2,3-bisphosphoglycerate-independent phosphoglycerate mutase (511 aa).

Residues Asp12 and Ser62 each contribute to the Mn(2+) site. Catalysis depends on Ser62, which acts as the Phosphoserine intermediate. Residues His123, 153–154, Arg185, Arg191, 260–263, and Lys335 each bind substrate; these read RD and RPDR. Residues Asp402, His406, Asp443, His444, and His462 each contribute to the Mn(2+) site.

This sequence belongs to the BPG-independent phosphoglycerate mutase family. As to quaternary structure, monomer. Requires Mn(2+) as cofactor.

It carries out the reaction (2R)-2-phosphoglycerate = (2R)-3-phosphoglycerate. Its pathway is carbohydrate degradation; glycolysis; pyruvate from D-glyceraldehyde 3-phosphate: step 3/5. Catalyzes the interconversion of 2-phosphoglycerate and 3-phosphoglycerate. In Acetivibrio thermocellus (strain ATCC 27405 / DSM 1237 / JCM 9322 / NBRC 103400 / NCIMB 10682 / NRRL B-4536 / VPI 7372) (Clostridium thermocellum), this protein is 2,3-bisphosphoglycerate-independent phosphoglycerate mutase.